Here is a 388-residue protein sequence, read N- to C-terminus: Fructose-bisphosphate aldolase, chloroplastic (388 aa).

The transit peptide at 1–38 (MASATLLKSSFLPKKSEWGATRQAAAPKPVTVSMVVRA) directs the protein to the chloroplast. Arg72 lines the substrate pocket. Residue Glu215 is the Proton acceptor of the active site. Catalysis depends on Lys257, which acts as the Schiff-base intermediate with dihydroxyacetone-P. Residues 299–301 (SGG) and Arg329 contribute to the substrate site.

This sequence belongs to the class I fructose-bisphosphate aldolase family. As to quaternary structure, homotetramer. As to expression, expressed in leaf mesophyll cells.

It is found in the plastid. The protein localises to the chloroplast. It localises to the plastoglobule. It carries out the reaction beta-D-fructose 1,6-bisphosphate = D-glyceraldehyde 3-phosphate + dihydroxyacetone phosphate. Its pathway is carbohydrate degradation; glycolysis; D-glyceraldehyde 3-phosphate and glycerone phosphate from D-glucose: step 4/4. Plays a key role in glycolysis and gluconeogenesis. The sequence is that of Fructose-bisphosphate aldolase, chloroplastic from Oryza sativa subsp. japonica (Rice).